We begin with the raw amino-acid sequence, 370 residues long: Anhydro-N-acetylmuramic acid kinase (370 aa).

An ATP-binding site is contributed by 12 to 19 (GTSLDGVD).

The protein belongs to the anhydro-N-acetylmuramic acid kinase family.

The enzyme catalyses 1,6-anhydro-N-acetyl-beta-muramate + ATP + H2O = N-acetyl-D-muramate 6-phosphate + ADP + H(+). It functions in the pathway amino-sugar metabolism; 1,6-anhydro-N-acetylmuramate degradation. The protein operates within cell wall biogenesis; peptidoglycan recycling. Functionally, catalyzes the specific phosphorylation of 1,6-anhydro-N-acetylmuramic acid (anhMurNAc) with the simultaneous cleavage of the 1,6-anhydro ring, generating MurNAc-6-P. Is required for the utilization of anhMurNAc either imported from the medium or derived from its own cell wall murein, and thus plays a role in cell wall recycling. The polypeptide is Anhydro-N-acetylmuramic acid kinase (Yersinia pseudotuberculosis serotype O:1b (strain IP 31758)).